A 161-amino-acid chain; its full sequence is Phosphopantetheine adenylyltransferase (161 aa).

Residue S8 participates in substrate binding. ATP-binding positions include 8 to 9 (SF) and H16. Substrate contacts are provided by K40, L72, and R86. ATP is bound by residues 87 to 89 (GLR), E97, and 122 to 128 (FSFVSSS).

This sequence belongs to the bacterial CoaD family. As to quaternary structure, homohexamer. Mg(2+) serves as cofactor.

The protein localises to the cytoplasm. The enzyme catalyses (R)-4'-phosphopantetheine + ATP + H(+) = 3'-dephospho-CoA + diphosphate. Its pathway is cofactor biosynthesis; coenzyme A biosynthesis; CoA from (R)-pantothenate: step 4/5. In terms of biological role, reversibly transfers an adenylyl group from ATP to 4'-phosphopantetheine, yielding dephospho-CoA (dPCoA) and pyrophosphate. The chain is Phosphopantetheine adenylyltransferase from Thermotoga neapolitana (strain ATCC 49049 / DSM 4359 / NBRC 107923 / NS-E).